A 596-amino-acid chain; its full sequence is Probable lysosomal cobalamin transporter (596 aa).

A run of 10 helical transmembrane segments spans residues Ala7–Phe27, Ile46–Val66, Ile95–Thr115, Thr145–Ala165, Leu196–Leu216, Leu313–Thr333, Ile350–Val370, Val376–Ile396, Met420–Ile440, and Phe507–Phe527. Residues Trp566–Asp596 are disordered. Basic and acidic residues predominate over residues Ile587 to Asp596.

This sequence belongs to the LIMR family. LMBRD1 subfamily.

It localises to the lysosome membrane. Functionally, probable lysosomal cobalamin transporter. Required to export cobalamin from lysosomes allowing its conversion to cofactors. In Sclerotinia sclerotiorum (strain ATCC 18683 / 1980 / Ss-1) (White mold), this protein is Probable lysosomal cobalamin transporter.